Consider the following 1217-residue polypeptide: ATP-dependent helicase/nuclease subunit A (1217 aa).

The 466-residue stretch at 10-475 (VIWTDAQWQS…IDLSQNFRSR (466 aa)) folds into the UvrD-like helicase ATP-binding domain. 31-38 (AAAGSGKT) provides a ligand contact to ATP. Positions 476–786 (KEVLSTTNYI…RMMTIHSSKG (311 aa)) constitute a UvrD-like helicase C-terminal domain.

It belongs to the helicase family. AddA subfamily. As to quaternary structure, heterodimer of AddA and AddB/RexB. The cofactor is Mg(2+).

The catalysed reaction is Couples ATP hydrolysis with the unwinding of duplex DNA by translocating in the 3'-5' direction.. The enzyme catalyses ATP + H2O = ADP + phosphate + H(+). Functionally, the heterodimer acts as both an ATP-dependent DNA helicase and an ATP-dependent, dual-direction single-stranded exonuclease. Recognizes the chi site generating a DNA molecule suitable for the initiation of homologous recombination. The AddA nuclease domain is required for chi fragment generation; this subunit has the helicase and 3' -&gt; 5' nuclease activities. The protein is ATP-dependent helicase/nuclease subunit A of Staphylococcus aureus (strain MW2).